Here is a 66-residue protein sequence, read N- to C-terminus: U10-theraphotoxin-Cg1a 1 (66 aa).

The N-terminal stretch at methionine 1 to alanine 21 is a signal peptide. A propeptide spanning residues alanine 22–arginine 29 is cleaved from the precursor. 3 disulfides stabilise this stretch: cysteine 31–cysteine 46, cysteine 38–cysteine 51, and cysteine 45–cysteine 58.

Belongs to the neurotoxin 10 (Hwtx-1) family. 29 (Jztx-13) subfamily. As to expression, expressed by the venom gland.

Its subcellular location is the secreted. Its function is as follows. Probable ion channel inhibitor. In Chilobrachys guangxiensis (Chinese earth tiger tarantula), this protein is U10-theraphotoxin-Cg1a 1.